The following is a 258-amino-acid chain: Acyl-[acyl-carrier-protein]--UDP-N-acetylglucosamine O-acyltransferase (258 aa).

The protein belongs to the transferase hexapeptide repeat family. LpxA subfamily. Homotrimer.

The protein localises to the cytoplasm. The enzyme catalyses a (3R)-hydroxyacyl-[ACP] + UDP-N-acetyl-alpha-D-glucosamine = a UDP-3-O-[(3R)-3-hydroxyacyl]-N-acetyl-alpha-D-glucosamine + holo-[ACP]. The protein operates within glycolipid biosynthesis; lipid IV(A) biosynthesis; lipid IV(A) from (3R)-3-hydroxytetradecanoyl-[acyl-carrier-protein] and UDP-N-acetyl-alpha-D-glucosamine: step 1/6. Its function is as follows. Involved in the biosynthesis of lipid A, a phosphorylated glycolipid that anchors the lipopolysaccharide to the outer membrane of the cell. This Azotobacter vinelandii (strain DJ / ATCC BAA-1303) protein is Acyl-[acyl-carrier-protein]--UDP-N-acetylglucosamine O-acyltransferase.